The primary structure comprises 468 residues: Chromosomal replication initiator protein DnaA (468 aa).

The tract at residues 1–84 (MSSSLWLQCL…RFEVGSRPVA (84 aa)) is domain I, interacts with DnaA modulators. Residues 81–104 (RPVAAPKPAPTRTPADVAAESSAP) form a disordered region. The tract at residues 84 to 131 (AAPKPAPTRTPADVAAESSAPAQLQARKPVHKTWDDDAQAIADINHRS) is domain II. The domain III, AAA+ region stretch occupies residues 132 to 348 (NVNPKHKFNN…GALNRVIANA (217 aa)). The ATP site is built by glycine 176, glycine 178, lysine 179, and threonine 180. The interval 349–468 (NFTGRPITID…YSNLIRTLSS (120 aa)) is domain IV, binds dsDNA.

It belongs to the DnaA family. Oligomerizes as a right-handed, spiral filament on DNA at oriC.

Its subcellular location is the cytoplasm. In terms of biological role, plays an essential role in the initiation and regulation of chromosomal replication. ATP-DnaA binds to the origin of replication (oriC) to initiate formation of the DNA replication initiation complex once per cell cycle. Binds the DnaA box (a 9 base pair repeat at the origin) and separates the double-stranded (ds)DNA. Forms a right-handed helical filament on oriC DNA; dsDNA binds to the exterior of the filament while single-stranded (ss)DNA is stabiized in the filament's interior. The ATP-DnaA-oriC complex binds and stabilizes one strand of the AT-rich DNA unwinding element (DUE), permitting loading of DNA polymerase. After initiation quickly degrades to an ADP-DnaA complex that is not apt for DNA replication. Binds acidic phospholipids. In Vibrio campbellii (strain ATCC BAA-1116), this protein is Chromosomal replication initiator protein DnaA.